Reading from the N-terminus, the 186-residue chain is ATP synthase subunit b (186 aa).

Residues 28 to 48 (IVWSIIPFAVILFVFAKVVLP) traverse the membrane as a helical segment.

It belongs to the ATPase B chain family. In terms of assembly, F-type ATPases have 2 components, F(1) - the catalytic core - and F(0) - the membrane proton channel. F(1) has five subunits: alpha(3), beta(3), gamma(1), delta(1), epsilon(1). F(0) has three main subunits: a(1), b(2) and c(10-14). The alpha and beta chains form an alternating ring which encloses part of the gamma chain. F(1) is attached to F(0) by a central stalk formed by the gamma and epsilon chains, while a peripheral stalk is formed by the delta and b chains.

It localises to the cell membrane. Functionally, f(1)F(0) ATP synthase produces ATP from ADP in the presence of a proton or sodium gradient. F-type ATPases consist of two structural domains, F(1) containing the extramembraneous catalytic core and F(0) containing the membrane proton channel, linked together by a central stalk and a peripheral stalk. During catalysis, ATP synthesis in the catalytic domain of F(1) is coupled via a rotary mechanism of the central stalk subunits to proton translocation. Component of the F(0) channel, it forms part of the peripheral stalk, linking F(1) to F(0). The chain is ATP synthase subunit b from Corynebacterium urealyticum (strain ATCC 43042 / DSM 7109).